We begin with the raw amino-acid sequence, 717 residues long: DNA ligase (717 aa).

NAD(+) is bound by residues 44-48 (DADYD), 93-94 (SL), and E127. The N6-AMP-lysine intermediate role is filled by K129. NAD(+) is bound by residues R150, E186, K302, and K326. Residues C431, C434, C455, and C461 each contribute to the Zn(2+) site. Residues 639–717 (ATDSPVAGKT…EDEWLALIGG (79 aa)) enclose the BRCT domain.

The protein belongs to the NAD-dependent DNA ligase family. LigA subfamily. The cofactor is Mg(2+). It depends on Mn(2+) as a cofactor.

It carries out the reaction NAD(+) + (deoxyribonucleotide)n-3'-hydroxyl + 5'-phospho-(deoxyribonucleotide)m = (deoxyribonucleotide)n+m + AMP + beta-nicotinamide D-nucleotide.. Functionally, DNA ligase that catalyzes the formation of phosphodiester linkages between 5'-phosphoryl and 3'-hydroxyl groups in double-stranded DNA using NAD as a coenzyme and as the energy source for the reaction. It is essential for DNA replication and repair of damaged DNA. This chain is DNA ligase, found in Rhizobium meliloti (strain 1021) (Ensifer meliloti).